Here is a 427-residue protein sequence, read N- to C-terminus: 3-phosphoshikimate 1-carboxyvinyltransferase (427 aa).

The 3-phosphoshikimate site is built by Lys20, Ser21, and Arg25. Residue Lys20 participates in phosphoenolpyruvate binding. Residues Gly92 and Arg120 each coordinate phosphoenolpyruvate. 4 residues coordinate 3-phosphoshikimate: Ser166, Gln168, Asp312, and Lys339. Phosphoenolpyruvate is bound at residue Gln168. Asp312 functions as the Proton acceptor in the catalytic mechanism. Phosphoenolpyruvate is bound by residues Arg343 and Arg385.

Belongs to the EPSP synthase family. Monomer.

Its subcellular location is the cytoplasm. It carries out the reaction 3-phosphoshikimate + phosphoenolpyruvate = 5-O-(1-carboxyvinyl)-3-phosphoshikimate + phosphate. The protein operates within metabolic intermediate biosynthesis; chorismate biosynthesis; chorismate from D-erythrose 4-phosphate and phosphoenolpyruvate: step 6/7. Functionally, catalyzes the transfer of the enolpyruvyl moiety of phosphoenolpyruvate (PEP) to the 5-hydroxyl of shikimate-3-phosphate (S3P) to produce enolpyruvyl shikimate-3-phosphate and inorganic phosphate. The sequence is that of 3-phosphoshikimate 1-carboxyvinyltransferase from Streptococcus sanguinis (strain SK36).